The following is a 213-amino-acid chain: V-type proton ATPase subunit c'' (213 aa).

At 1–14 (MNKESKDDDMSLGK) the chain is on the vacuolar side. A helical transmembrane segment spans residues 15 to 35 (FSFSHFLYYLVLIVVIVYGLY). Residues 36–61 (KLFTGHGSDINFGKFLLRTSPYMWAN) lie on the Cytoplasmic side of the membrane. Residues 62 to 82 (LGIALCVGLSVVGAAWGIFIT) form a helical membrane-spanning segment. The Vacuolar portion of the chain corresponds to 83 to 100 (GSSMIGAGVRAPRITTKN). Residues 101-121 (LISIIFCEVVAIYGLIIAIVF) form a helical membrane-spanning segment. The Cytoplasmic portion of the chain corresponds to 122-144 (SSKLTVATAENMYSKSNLYTGYS). The helical transmembrane segment at 145–165 (LFWAGITVGASNLICGIAVGI) threads the bilayer. At 166–183 (TGATAAISDAADSALFVK) the chain is on the vacuolar side. Residues 184 to 204 (ILVIEIFGSILGLLGLIVGLL) form a helical membrane-spanning segment. The Cytoplasmic segment spans residues 205–213 (MAGKASEFQ).

This sequence belongs to the V-ATPase proteolipid subunit family. In terms of assembly, V-ATPase is a heteromultimeric enzyme composed of a peripheral catalytic V1 complex (components A to H) attached to an integral membrane V0 proton pore complex (components: a, c, c', c'', d, e, f and VOA1). The decameric c-ring forms the proton-conducting pore, and is composed of eight proteolipid subunits c, one subunit c' and one subunit c''.

It is found in the vacuole membrane. Proton-conducting pore forming subunit of the V0 complex of vacuolar(H+)-ATPase (V-ATPase), a multisubunit enzyme composed of a peripheral complex (V1) that hydrolyzes ATP and a membrane integral complex (V0) that translocates protons. V-ATPase is responsible for acidifying and maintaining the pH of intracellular compartments. This is V-type proton ATPase subunit c'' (VMA16) from Saccharomyces cerevisiae (strain ATCC 204508 / S288c) (Baker's yeast).